We begin with the raw amino-acid sequence, 223 residues long: Thiamine-phosphate synthase (223 aa).

Residues 47 to 51 and Asn-84 each bind 4-amino-2-methyl-5-(diphosphooxymethyl)pyrimidine; that span reads QLRDK. Residues Asp-85 and Asp-104 each contribute to the Mg(2+) site. Ser-123 contacts 4-amino-2-methyl-5-(diphosphooxymethyl)pyrimidine. 150–152 provides a ligand contact to 2-[(2R,5Z)-2-carboxy-4-methylthiazol-5(2H)-ylidene]ethyl phosphate; that stretch reads TPT. Position 153 (Lys-153) interacts with 4-amino-2-methyl-5-(diphosphooxymethyl)pyrimidine. Gly-182 is a binding site for 2-[(2R,5Z)-2-carboxy-4-methylthiazol-5(2H)-ylidene]ethyl phosphate.

This sequence belongs to the thiamine-phosphate synthase family. Mg(2+) serves as cofactor.

The catalysed reaction is 2-[(2R,5Z)-2-carboxy-4-methylthiazol-5(2H)-ylidene]ethyl phosphate + 4-amino-2-methyl-5-(diphosphooxymethyl)pyrimidine + 2 H(+) = thiamine phosphate + CO2 + diphosphate. It carries out the reaction 2-(2-carboxy-4-methylthiazol-5-yl)ethyl phosphate + 4-amino-2-methyl-5-(diphosphooxymethyl)pyrimidine + 2 H(+) = thiamine phosphate + CO2 + diphosphate. The enzyme catalyses 4-methyl-5-(2-phosphooxyethyl)-thiazole + 4-amino-2-methyl-5-(diphosphooxymethyl)pyrimidine + H(+) = thiamine phosphate + diphosphate. The protein operates within cofactor biosynthesis; thiamine diphosphate biosynthesis; thiamine phosphate from 4-amino-2-methyl-5-diphosphomethylpyrimidine and 4-methyl-5-(2-phosphoethyl)-thiazole: step 1/1. Condenses 4-methyl-5-(beta-hydroxyethyl)thiazole monophosphate (THZ-P) and 2-methyl-4-amino-5-hydroxymethyl pyrimidine pyrophosphate (HMP-PP) to form thiamine monophosphate (TMP). The sequence is that of Thiamine-phosphate synthase from Saccharopolyspora erythraea (strain ATCC 11635 / DSM 40517 / JCM 4748 / NBRC 13426 / NCIMB 8594 / NRRL 2338).